Reading from the N-terminus, the 60-residue chain is SRRERTIYTPEQLEAMEEVFGVNRYPDVSMREELASRLGINESKIQVWFKNRRAKLRNLE.

A DNA-binding region (homeobox) is located at residues 1–60 (SRRERTIYTPEQLEAMEEVFGVNRYPDVSMREELASRLGINESKIQVWFKNRRAKLRNLE).

Belongs to the paired homeobox family. Bicoid subfamily.

The protein resides in the nucleus. This Echinococcus granulosus (Hydatid tapeworm) protein is Homeobox protein EgHBX4 (HBX4).